The sequence spans 117 residues: MGFRVLVLVVMATTFALPFTFFEEPGRSPFRPALRSEEAQALRHGLTLLLARRADGQPPDMRQPEMRRPEMRRPEVRQPEFAELSVGQRRWDVDQCMYYCLTGVVGYSYTECETMCT.

The first 22 residues, 1–22 (MGFRVLVLVVMATTFALPFTFF), serve as a signal peptide directing secretion. Positions 23-90 (EEPGRSPFRP…FAELSVGQRR (68 aa)) are excised as a propeptide. Residues 53-77 (RADGQPPDMRQPEMRRPEMRRPEVR) are disordered. The span at 62-77 (RQPEMRRPEMRRPEVR) shows a compositional bias: basic and acidic residues. Intrachain disulfides connect Cys-96/Cys-116 and Cys-100/Cys-112.

It belongs to the conotoxin R superfamily. As to expression, expressed by the venom duct.

It localises to the secreted. The polypeptide is Conotoxin vil14.2 (Conus villepinii (Villepin's cone)).